The following is a 289-amino-acid chain: ATP synthase gamma chain (289 aa).

This sequence belongs to the ATPase gamma chain family. As to quaternary structure, F-type ATPases have 2 components, CF(1) - the catalytic core - and CF(0) - the membrane proton channel. CF(1) has five subunits: alpha(3), beta(3), gamma(1), delta(1), epsilon(1). CF(0) has three main subunits: a, b and c.

It localises to the cell inner membrane. In terms of biological role, produces ATP from ADP in the presence of a proton gradient across the membrane. The gamma chain is believed to be important in regulating ATPase activity and the flow of protons through the CF(0) complex. The protein is ATP synthase gamma chain of Haemophilus influenzae (strain 86-028NP).